Here is a 71-residue protein sequence, read N- to C-terminus: Translation initiation factor IF-1 (71 aa).

One can recognise an S1-like domain in the interval 1–71 (MAKQAAIEQD…LTKARITYRY (71 aa)).

Belongs to the IF-1 family. In terms of assembly, component of the 30S ribosomal translation pre-initiation complex which assembles on the 30S ribosome in the order IF-2 and IF-3, IF-1 and N-formylmethionyl-tRNA(fMet); mRNA recruitment can occur at any time during PIC assembly.

It localises to the cytoplasm. Its function is as follows. One of the essential components for the initiation of protein synthesis. Stabilizes the binding of IF-2 and IF-3 on the 30S subunit to which N-formylmethionyl-tRNA(fMet) subsequently binds. Helps modulate mRNA selection, yielding the 30S pre-initiation complex (PIC). Upon addition of the 50S ribosomal subunit IF-1, IF-2 and IF-3 are released leaving the mature 70S translation initiation complex. This Christiangramia forsetii (strain DSM 17595 / CGMCC 1.15422 / KT0803) (Gramella forsetii) protein is Translation initiation factor IF-1.